The chain runs to 109 residues: Non-structural protein ORF4a (109 aa).

As to quaternary structure, interacts with host PRKRA/PACT.

It is found in the host cytoplasm. In terms of biological role, dsRNA-binding protein that plays a role in the inhibition of host innate response. Suppresses host PACT-induced activation of RIGI and MDA5 and thereby circumvents the production of type I interferons. Also prevents the activation of host NF-kappa-B. Inhibits the integrated stress response (ISR) in the infected cell by binding to dsRNA and inhibiting EIF2AK2-mediated phosphorylation of EIF2S1/eIF2-alpha. Stress granule formation is thus inhibited, which allows protein synthesis and viral replication. The sequence is that of Non-structural protein ORF4a (ORF4a) from Middle East respiratory syndrome-related coronavirus (isolate United Kingdom/H123990006/2012) (MERS-CoV).